The sequence spans 158 residues: Cyclic pyranopterin monophosphate synthase (158 aa).

Substrate-binding positions include 75-77 (LCH) and 113-114 (ME). The active site involves Asp-128.

Belongs to the MoaC family. As to quaternary structure, homohexamer; trimer of dimers.

The enzyme catalyses (8S)-3',8-cyclo-7,8-dihydroguanosine 5'-triphosphate = cyclic pyranopterin phosphate + diphosphate. It participates in cofactor biosynthesis; molybdopterin biosynthesis. Catalyzes the conversion of (8S)-3',8-cyclo-7,8-dihydroguanosine 5'-triphosphate to cyclic pyranopterin monophosphate (cPMP). This chain is Cyclic pyranopterin monophosphate synthase, found in Actinobacillus succinogenes (strain ATCC 55618 / DSM 22257 / CCUG 43843 / 130Z).